A 212-amino-acid polypeptide reads, in one-letter code: uncharacterized protein (212 aa).

The S-adenosyl-L-methionine site is built by Gly53, Glu74, and Asp97.

Belongs to the methyltransferase superfamily. YrrT family.

Its function is as follows. Could be a S-adenosyl-L-methionine-dependent methyltransferase. This is an uncharacterized protein from Bacillus cereus (strain 03BB102).